A 280-amino-acid polypeptide reads, in one-letter code: Ribosomal RNA small subunit methyltransferase A (280 aa).

Residues H13, L15, G40, E61, D85, and N106 each contribute to the S-adenosyl-L-methionine site. The tract at residues 258 to 280 is disordered; it reads RPPADVEDANAPHTEQGKGDNSQ.

It belongs to the class I-like SAM-binding methyltransferase superfamily. rRNA adenine N(6)-methyltransferase family. RsmA subfamily.

It is found in the cytoplasm. It catalyses the reaction adenosine(1518)/adenosine(1519) in 16S rRNA + 4 S-adenosyl-L-methionine = N(6)-dimethyladenosine(1518)/N(6)-dimethyladenosine(1519) in 16S rRNA + 4 S-adenosyl-L-homocysteine + 4 H(+). Its function is as follows. Specifically dimethylates two adjacent adenosines (A1518 and A1519) in the loop of a conserved hairpin near the 3'-end of 16S rRNA in the 30S particle. May play a critical role in biogenesis of 30S subunits. This Alcanivorax borkumensis (strain ATCC 700651 / DSM 11573 / NCIMB 13689 / SK2) protein is Ribosomal RNA small subunit methyltransferase A.